The primary structure comprises 595 residues: Probable carotenoid cleavage dioxygenase 4, chloroplastic (595 aa).

The transit peptide at 1–34 directs the protein to the chloroplast; it reads MDSVSSSSFLSSTFSLHHSLLRRRSSSPTLLRIN. The disordered stretch occupies residues 41–74; the sequence is RSPITNPSDNNDRRNKPKTLHNRTNHTLVSSPPK. Positions 55–64 are enriched in basic residues; sequence NKPKTLHNRT. Fe cation-binding residues include His287, His336, His404, and His583.

The protein belongs to the carotenoid oxygenase family. In terms of assembly, interacts with VAR3. Interacts with PGM48. The cofactor is Fe(2+). Mostly expressed in flowers (e.g. sepals and petals), siliques, seeds, leaves and cotyledons.

It is found in the plastid. The protein resides in the chloroplast. It localises to the plastoglobule. In terms of biological role, may be involved in carotenoid cleavage. This is Probable carotenoid cleavage dioxygenase 4, chloroplastic (CCD4) from Arabidopsis thaliana (Mouse-ear cress).